A 637-amino-acid chain; its full sequence is Extracellular metalloproteinase 2 (637 aa).

The N-terminal stretch at 1–20 (MRSFLLASLASVATLKSAQA) is a signal peptide. Residues 21-244 (HPAHSTRGLS…VHAVVDYSAD (224 aa)) constitute a propeptide that is removed on maturation. Asn-302, Asn-328, Asn-337, and Asn-413 each carry an N-linked (GlcNAc...) asparagine glycan. His-430 serves as a coordination point for Zn(2+). Glu-431 is an active-site residue. His-434 provides a ligand contact to Zn(2+).

The protein belongs to the peptidase M36 family. Requires Zn(2+) as cofactor.

Its subcellular location is the secreted. Its function is as follows. Secreted metalloproteinase that allows assimilation of proteinaceous substrates. This chain is Extracellular metalloproteinase 2 (MEP2), found in Phaeosphaeria nodorum (strain SN15 / ATCC MYA-4574 / FGSC 10173) (Glume blotch fungus).